A 405-amino-acid polypeptide reads, in one-letter code: Probable succinyl-diaminopimelate desuccinylase (405 aa).

A Zn(2+)-binding site is contributed by His-72. Asp-74 is a catalytic residue. Asp-105 contacts Zn(2+). The active-site Proton acceptor is the Glu-139. 3 residues coordinate Zn(2+): Glu-140, Glu-165, and His-377.

This sequence belongs to the peptidase M20A family. Zn(2+) serves as cofactor. Co(2+) is required as a cofactor.

The catalysed reaction is N-succinyl-(2S,6S)-2,6-diaminopimelate + H2O = (2S,6S)-2,6-diaminopimelate + succinate. The protein operates within amino-acid biosynthesis; L-lysine biosynthesis via DAP pathway; LL-2,6-diaminopimelate from (S)-tetrahydrodipicolinate (succinylase route): step 3/3. The chain is Probable succinyl-diaminopimelate desuccinylase (dapE) from Staphylococcus epidermidis (strain ATCC 35984 / DSM 28319 / BCRC 17069 / CCUG 31568 / BM 3577 / RP62A).